We begin with the raw amino-acid sequence, 285 residues long: Nucleotide-binding protein HI_1146 (285 aa).

8-15 (GRSGAGKS) is a binding site for ATP. 56–59 (DIRN) provides a ligand contact to GTP.

The protein belongs to the RapZ-like family.

Displays ATPase and GTPase activities. The chain is Nucleotide-binding protein HI_1146 from Haemophilus influenzae (strain ATCC 51907 / DSM 11121 / KW20 / Rd).